Reading from the N-terminus, the 214-residue chain is Osteoclast-stimulating factor 1 (214 aa).

Ser2 bears the N-acetylserine mark. Residues 12-71 (GQVKVFRALYTFEPRTPDELYFEEGDIIYITDMSDTNWWKGTSKGRTGLIPSNYVAEQAE) enclose the SH3 domain. 3 ANK repeats span residues 72–101 (SIDN…GVNG), 105–135 (AGST…ELNQ), and 139–168 (LGDT…RTDL). Phosphothreonine is present on Thr200. 2 positions are modified to phosphoserine: Ser202 and Ser213.

As to quaternary structure, interacts with SRC and SMN1. Interacts with FASLG.

The protein resides in the cytoplasm. Functionally, induces bone resorption, acting probably through a signaling cascade which results in the secretion of factor(s) enhancing osteoclast formation and activity. The polypeptide is Osteoclast-stimulating factor 1 (OSTF1) (Sus scrofa (Pig)).